The primary structure comprises 529 residues: Corneodesmosin (529 aa).

A signal peptide spans 1–32 (MGSSRAPWMGRVGGHGMMALLLAGLLLPGTLA). Disordered stretches follow at residues 38-248 (FSDP…SVSG) and 383-492 (GSTG…SSAG). 6 stretches are compositionally biased toward low complexity: residues 58 to 83 (GKGDSSGFSSYSGSSSSGSSISSARS), 90 to 100 (GSSSGSSIAQG), 111 to 175 (GYSQ…NGSA), 189 to 231 (PSQP…SGGP), 392 to 408 (SPSSSRVPSSSSISSSS), and 426 to 441 (PGTGSFSSSSSSQSSG). Asn-172 carries an N-linked (GlcNAc...) asparagine glycan. The segment covering 449 to 467 (GSKSSSSGHPCMSVSSLTL) has biased composition (polar residues).

Exclusively expressed in skin.

It localises to the secreted. Its function is as follows. Important for the epidermal barrier integrity. In Homo sapiens (Human), this protein is Corneodesmosin (CDSN).